The primary structure comprises 1032 residues: Probable ATP-dependent RNA helicase DDX46 (1032 aa).

A compositionally biased stretch (basic residues) spans 1-24 (MGRESRHYRKRSASRGRSGSRSRS). The segment at 1 to 227 (MGRESRHYRK…NEMEDEELDP (227 aa)) is disordered. Gly2 is lipidated: N-myristoyl glycine. The span at 26-49 (SPSDKRSKRGDDRRSRSRDRDRRR) shows a compositional bias: basic and acidic residues. 2 stretches are compositionally biased toward basic residues: residues 50–73 (ERSRSRDKRRSRSRDRKRLRRSRS) and 81–103 (ERRRSRSRDRRRSRSRSRGRRSR). The segment covering 112–200 (KKAENRSRSK…EMKQGKKWSL (89 aa)) has biased composition (basic and acidic residues). Residues 152–197 (DQNKLEEEMRKRKERVEKWREEQRKKAMENIGELKKEIEEMKQGKK) are a coiled coil. Lys186 participates in a covalent cross-link: Glycyl lysine isopeptide (Lys-Gly) (interchain with G-Cter in SUMO2). Position 199 is a phosphoserine (Ser199). Over residues 201-211 (EDDDDDEDDPA) the composition is skewed to acidic residues. The residue at position 263 (Lys263) is an N6-acetyllysine. Tyr294 bears the Phosphotyrosine mark. Residues Ser295 and Ser296 each carry the phosphoserine modification. Lys325 is covalently cross-linked (Glycyl lysine isopeptide (Lys-Gly) (interchain with G-Cter in SUMO2)). Position 346 is a phosphoserine (Ser346). Residues 372 to 400 (KSWVQCGISMKILNSLKKHGYEKPTPIQT) carry the Q motif motif. In terms of domain architecture, Helicase ATP-binding spans 403–581 (IPAIMSGRDL…RRILSKPIEV (179 aa)). Positions 529–532 (DEAD) match the DEAD box motif. The region spanning 592 to 753 (DVEQQVIVIE…AVPPDLEKLW (162 aa)) is the Helicase C-terminal domain. Lys776 bears the N6-acetyllysine mark. A Glycyl lysine isopeptide (Lys-Gly) (interchain with G-Cter in SUMO2) cross-link involves residue Lys779. At Ser804 the chain carries Phosphoserine. Lys904 is modified (N6-acetyllysine). Residues Lys908 and Lys916 each participate in a glycyl lysine isopeptide (Lys-Gly) (interchain with G-Cter in SUMO2) cross-link. Position 929 is a phosphoserine (Ser929).

Belongs to the DEAD box helicase family. DDX46/PRP5 subfamily. In terms of assembly, component of the 17S U2 SnRNP complex, a ribonucleoprotein complex that contains small nuclear RNA (snRNA) U2 and a number of specific proteins. Within the 17S U2 SnRNP complex, DDX46 is part of the SF3B subcomplex, which is required for 'A' complex assembly formed by the stable binding of U2 snRNP to the branchpoint sequence in pre-mRNA. Recruited to the 17S U2 SnRNP complex following release of DDX42; DDX42 and DDX46 bind the SF3B subcomplex in a competitive manner.

Its subcellular location is the nucleus speckle. The protein localises to the nucleus. It is found in the cajal body. The enzyme catalyses ATP + H2O = ADP + phosphate + H(+). Its function is as follows. Component of the 17S U2 SnRNP complex of the spliceosome, a large ribonucleoprotein complex that removes introns from transcribed pre-mRNAs. The 17S U2 SnRNP complex (1) directly participates in early spliceosome assembly and (2) mediates recognition of the intron branch site during pre-mRNA splicing by promoting the selection of the pre-mRNA branch-site adenosine, the nucleophile for the first step of splicing. Within the 17S U2 SnRNP complex, DDX46 plays essential roles during assembly of pre-spliceosome and proofreading of the branch site. In Rattus norvegicus (Rat), this protein is Probable ATP-dependent RNA helicase DDX46 (Ddx46).